A 443-amino-acid polypeptide reads, in one-letter code: ATP-dependent protease ATPase subunit HslU (443 aa).

ATP-binding positions include I18, 60 to 65, D256, E321, and R393; that span reads GVGKTE.

Belongs to the ClpX chaperone family. HslU subfamily. In terms of assembly, a double ring-shaped homohexamer of HslV is capped on each side by a ring-shaped HslU homohexamer. The assembly of the HslU/HslV complex is dependent on binding of ATP.

The protein resides in the cytoplasm. ATPase subunit of a proteasome-like degradation complex; this subunit has chaperone activity. The binding of ATP and its subsequent hydrolysis by HslU are essential for unfolding of protein substrates subsequently hydrolyzed by HslV. HslU recognizes the N-terminal part of its protein substrates and unfolds these before they are guided to HslV for hydrolysis. The sequence is that of ATP-dependent protease ATPase subunit HslU from Buchnera aphidicola subsp. Acyrthosiphon pisum (strain APS) (Acyrthosiphon pisum symbiotic bacterium).